Consider the following 358-residue polypeptide: 3-isopropylmalate dehydrogenase (358 aa).

Substrate-binding residues include Arg92, Arg102, Arg130, and Asp224. Mg(2+) is bound by residues Asp224, Asp248, and Asp252. 282–294 (GSAPDIAGQGIAN) is an NAD(+) binding site.

Belongs to the isocitrate and isopropylmalate dehydrogenases family. LeuB type 1 subfamily. Homodimer. The cofactor is Mg(2+). Mn(2+) is required as a cofactor.

It is found in the cytoplasm. It carries out the reaction (2R,3S)-3-isopropylmalate + NAD(+) = 4-methyl-2-oxopentanoate + CO2 + NADH. Its pathway is amino-acid biosynthesis; L-leucine biosynthesis; L-leucine from 3-methyl-2-oxobutanoate: step 3/4. Its function is as follows. Catalyzes the oxidation of 3-carboxy-2-hydroxy-4-methylpentanoate (3-isopropylmalate) to 3-carboxy-4-methyl-2-oxopentanoate. The product decarboxylates to 4-methyl-2 oxopentanoate. The polypeptide is 3-isopropylmalate dehydrogenase (Bordetella avium (strain 197N)).